The primary structure comprises 611 residues: Alpha-1,2-mannosyltransferase ALG9 (611 aa).

Residues 1–10 are compositionally biased toward basic residues; the sequence is MASRGARQRL. The disordered stretch occupies residues 1–23; it reads MASRGARQRLKGSGASSGDTAPA. Topologically, residues 1–135 are lumenal; it reads MASRGARQRL…FHARILQTNK (135 aa). An N-linked (GlcNAc...) asparagine glycan is attached at Asn-77. The chain crosses the membrane as a helical span at residues 136 to 156; it reads ILVFYFLRCLLAFVSCICELY. At 157–171 the chain is on the cytoplasmic side; it reads FYKAVCKKFGLHVSR. Residues 172 to 192 traverse the membrane as a helical segment; sequence MMLAFLVLSTGMFCSSSAFLP. Topologically, residues 193–213 are lumenal; sequence SSFCMYTTLIAMTGWYMDKTS. The chain crosses the membrane as a helical span at residues 214–234; sequence IAVLGVAAGAILGWPFSAALG. The Cytoplasmic portion of the chain corresponds to 235 to 249; that stretch reads LPIAFDLLVMKHRWK. A helical membrane pass occupies residues 250 to 270; the sequence is SFFHWSLMALILFLVPVVVID. Topologically, residues 271–304 are lumenal; the sequence is SYYYGKLVIAPLNIVLYNVFTPHGPDLYGTEPWY. Residues 305 to 325 traverse the membrane as a helical segment; the sequence is FYLINGFLNFNVAFALALLVL. Residues 326 to 342 lie on the Cytoplasmic side of the membrane; the sequence is PLTSLMEYLLQRFHVQN. Residues 343 to 363 traverse the membrane as a helical segment; the sequence is LGHPYWLTLAPMYIWFIIFFI. At 364-370 the chain is on the lumenal side; the sequence is QPHKEER. The chain crosses the membrane as a helical span at residues 371 to 391; sequence FLFPVYPLICLCGAVALSALQ. Residues 392-405 lie on the Cytoplasmic side of the membrane; that stretch reads KCYHFVFQRYRLEH. Residues 406–426 traverse the membrane as a helical segment; it reads YTVTSNWLALGTVFLFGLLSF. Over 427 to 611 the chain is Lumenal; that stretch reads SRSVALFRGY…AKQIRKKSGG (185 aa). N-linked (GlcNAc...) asparagine glycosylation is present at Asn-593.

It belongs to the glycosyltransferase 22 family. Ubiquitously expressed; with highest levels in heart, liver and pancreas.

It is found in the endoplasmic reticulum membrane. The enzyme catalyses an alpha-D-Man-(1-&gt;2)-alpha-D-Man-(1-&gt;2)-alpha-D-Man-(1-&gt;3)-[alpha-D-Man-(1-&gt;3)-alpha-D-Man-(1-&gt;6)]-beta-D-Man-(1-&gt;4)-beta-D-GlcNAc-(1-&gt;4)-alpha-D-GlcNAc-diphospho-di-trans,poly-cis-dolichol + a di-trans,poly-cis-dolichyl beta-D-mannosyl phosphate = an alpha-D-Man-(1-&gt;2)-alpha-D-Man-(1-&gt;2)-alpha-D-Man-(1-&gt;3)-[alpha-D-Man-(1-&gt;2)-alpha-D-Man-(1-&gt;3)-alpha-D-Man-(1-&gt;6)]-beta-D-Man-(1-&gt;4)-beta-D-GlcNAc-(1-&gt;4)-alpha-D-GlcNAc-diphospho-di-trans,poly-cis-dolichol + a di-trans,poly-cis-dolichyl phosphate + H(+). It catalyses the reaction an alpha-D-Man-(1-&gt;2)-alpha-D-Man-(1-&gt;2)-alpha-D-Man-(1-&gt;3)-[alpha-D-Man-(1-&gt;2)-alpha-D-Man-(1-&gt;3)-[alpha-D-Man-(1-&gt;6)]-alpha-D-Man-(1-&gt;6)]-beta-D-Man-(1-&gt;4)-beta-D-GlcNAc-(1-&gt;4)-alpha-D-GlcNAc-diphospho-di-trans,poly-cis-dolichol + a di-trans,poly-cis-dolichyl beta-D-mannosyl phosphate = an alpha-D-Man-(1-&gt;2)-alpha-D-Man-(1-&gt;2)-alpha-D-Man-(1-&gt;3)-[alpha-D-Man-(1-&gt;2)-alpha-D-Man-(1-&gt;3)-[alpha-D-Man-(1-&gt;2)-alpha-D-Man-(1-&gt;6)]-alpha-D-Man-(1-&gt;6)]-beta-D-Man-(1-&gt;4)-beta-D-GlcNAc-(1-&gt;4)-alpha-D-GlcNAc-diphospho-di-trans,poly-cis-dolichol + a di-trans,poly-cis-dolichyl phosphate + H(+). Its pathway is protein modification; protein glycosylation. Its function is as follows. Mannosyltransferase that operates in the biosynthetic pathway of dolichol-linked oligosaccharides, the glycan precursors employed in protein asparagine (N)-glycosylation. The assembly of dolichol-linked oligosaccharides begins on the cytosolic side of the endoplasmic reticulum membrane and finishes in its lumen. The sequential addition of sugars to dolichol pyrophosphate produces dolichol-linked oligosaccharides containing fourteen sugars, including two GlcNAcs, nine mannoses and three glucoses. Once assembled, the oligosaccharide is transferred from the lipid to nascent proteins by oligosaccharyltransferases. In the lumen of the endoplasmic reticulum, catalyzes the addition of the seventh and ninth alpha-1,2-linked mannose residues to Man(6)GlcNAc(2)-PP-dolichol and Man(8)GlcNAc(2)-PP-dolichol respectively. The polypeptide is Alpha-1,2-mannosyltransferase ALG9 (Homo sapiens (Human)).